The chain runs to 862 residues: Phosphofurin acidic cluster sorting protein 2 (862 aa).

Disordered stretches follow at residues 151–215 (HEDS…TTSM), 263–436 (LDVE…TRSQ), and 658–713 (SSAT…SQGV). Low complexity predominate over residues 263-272 (LDVENPSDSG). Over residues 313 to 328 (SHREPPSPADVPEKTR) the composition is skewed to basic and acidic residues. Polar residues predominate over residues 332–344 (GKQQLSDSVSDTV). Residues serine 361, serine 387, serine 424, serine 662, and serine 665 each carry the phosphoserine modification. 2 stretches are compositionally biased toward low complexity: residues 658 to 693 (SSAT…KEAS) and 700 to 710 (PSVSGGLSSPS).

The protein belongs to the PACS family. As to quaternary structure, interacts with BID and PKD2. Interacts with SIRT1. Interacts with HDAC1. Interacts with TRPV1. Interacts with WDR37.

Its subcellular location is the endoplasmic reticulum. The protein localises to the mitochondrion. Functionally, multifunctional sorting protein that controls the endoplasmic reticulum (ER)-mitochondria communication, including the apposition of mitochondria with the ER and ER homeostasis. In addition, in response to apoptotic inducer, translocates BIB to mitochondria, which initiates a sequence of events including the formation of mitochondrial truncated BID, the release of cytochrome c, the activation of caspase-3 thereby causing cell death. May also involved in ion channel trafficking, directing acidic cluster-containing ion channels to distinct subcellular compartments. The polypeptide is Phosphofurin acidic cluster sorting protein 2 (Pacs2) (Mus musculus (Mouse)).